The primary structure comprises 168 residues: Phosphopantetheine adenylyltransferase (168 aa).

Substrate is bound at residue Thr10. Residues 10–11 and His18 each bind ATP; that span reads TF. Positions 42, 74, and 88 each coordinate substrate. Residues 89–91, Glu99, and 124–130 contribute to the ATP site; these read GLR and NSFISST.

It belongs to the bacterial CoaD family. As to quaternary structure, homohexamer. Mg(2+) serves as cofactor.

The protein resides in the cytoplasm. The enzyme catalyses (R)-4'-phosphopantetheine + ATP + H(+) = 3'-dephospho-CoA + diphosphate. It participates in cofactor biosynthesis; coenzyme A biosynthesis; CoA from (R)-pantothenate: step 4/5. Functionally, reversibly transfers an adenylyl group from ATP to 4'-phosphopantetheine, yielding dephospho-CoA (dPCoA) and pyrophosphate. This chain is Phosphopantetheine adenylyltransferase, found in Shewanella denitrificans (strain OS217 / ATCC BAA-1090 / DSM 15013).